Reading from the N-terminus, the 196-residue chain is PRADC1-like protein (196 aa).

The first 18 residues, 1–18 (MLIAWLVLAATLSRSIRA), serve as a signal peptide directing secretion. The PA domain occupies 73 to 171 (ITDPPGACQE…STLQRLKRVH (99 aa)). The N-linked (GlcNAc...) asparagine glycan is linked to Asn179.

It localises to the secreted. Its function is as follows. May be involved in iversification of muscle cell fates. The chain is PRADC1-like protein from Drosophila melanogaster (Fruit fly).